Here is a 256-residue protein sequence, read N- to C-terminus: MYSIRKQSRNLQRKWNSNITNRYPIKRKYVAGHTRPCVRRRLLYEPVERPFGHNVLCEKQHGDVFNLQQNTSYTSFVTYPSRGPSGDGRSRDYIKLQSMSVSGVIHAKANGNDDPMEVSPVVNGVFVFSLIMDTKPYLPAGVQGLPTFEELFGPYSACYVNLRLLNNQQHRYRVLHSVKRFVSSSGDTKVSQFRFNKRLSTRRYTIWASFHDGDLVNAGGNYRNISKNAILVSYAFVSEHAMSCKPFVQIETSYVG.

The short motif at Asn18 to Arg39 is the Bipartite nuclear localization signal element. The Nuclear localization signal signature appears at Ser81–Leu96. Residues Glu150–Asp187 are interaction with Arabidopsis thaliana NSI protein.

Belongs to the begomovirus nuclear shuttle protein family. Binds to single-stranded and double-stranded viral DNA. Interacts with the host nuclear shuttle interacting (NSI) protein. This interaction may allow NSP to recruit NSI monomers to the viral genome and thus regulate nuclear export of viral genome by NSP.

Its subcellular location is the host nucleus. It is found in the host cytoplasm. It localises to the host cell membrane. Its function is as follows. Binds to the genomic viral ssDNA, shuttles it into and out of the cell nucleus. Begomoviruses use 2 proteins to transport their DNA from cell to cell. The nuclear shuttle protein (NSP) shuttles it between nucleus and cytoplasm and the movement protein (MP) probably transports the DNA-NSP complex to the cell periphery and facilitates movement across the cell wall. The protein is Nuclear shuttle protein of Hewittia sublobata (Coralbush).